We begin with the raw amino-acid sequence, 224 residues long: MRSLLFSLTALVLAGCVQTPHKPMPDDPYYAPVLPEERAQPVVPTGSLFQDAYADNLYSDIKARRLGDIITVTLREQTTASKTATTETSKESTAELAAPTAFGRNITVGGNPLSAGINGTREFSGDGSSDQSNQLNGEITVTVIKVLPNGNLIVRGEKWMRINTGDEYIRLTGMIRPQDITAANQIPSTRVANARIEYSGTGSLAQVQEQGWLTRFFNSPIWPF.

Residues 1–15 form the signal peptide; sequence MRSLLFSLTALVLAG. Cys-16 carries N-palmitoyl cysteine lipidation. Cys-16 carries S-diacylglycerol cysteine lipidation.

It belongs to the FlgH family. As to quaternary structure, the basal body constitutes a major portion of the flagellar organelle and consists of four rings (L,P,S, and M) mounted on a central rod.

The protein localises to the cell outer membrane. The protein resides in the bacterial flagellum basal body. In terms of biological role, assembles around the rod to form the L-ring and probably protects the motor/basal body from shearing forces during rotation. The polypeptide is Flagellar L-ring protein (Idiomarina loihiensis (strain ATCC BAA-735 / DSM 15497 / L2-TR)).